The primary structure comprises 239 residues: MSEVITQEYTEDGKVLRRIRSFVRREGRLTKGQEAAMKECWPTMGIDYQPELLDWQQVFGNDNPVVLEIGFGMGASLVEMAKNAPEKNFLGIEVHSPGVGACLASAREAGVTNLRVMCHDAVEVFAHMIPDNSLHTLQLFFPDPWHKKRHHKRRIVQLEFAEMVRQKLMIGSGVFHMATDWENYAEHMVEVMNQAPGFANLATDGDYVPRPDERPLTKFEQRGHRLGHGVWDIKYQRTA.

S-adenosyl-L-methionine is bound by residues glutamate 68, glutamate 93, aspartate 120, and aspartate 143. The active site involves aspartate 143. Substrate is bound by residues lysine 147, aspartate 180, and threonine 217–glutamate 220.

It belongs to the class I-like SAM-binding methyltransferase superfamily. TrmB family.

The catalysed reaction is guanosine(46) in tRNA + S-adenosyl-L-methionine = N(7)-methylguanosine(46) in tRNA + S-adenosyl-L-homocysteine. The protein operates within tRNA modification; N(7)-methylguanine-tRNA biosynthesis. Catalyzes the formation of N(7)-methylguanine at position 46 (m7G46) in tRNA. The polypeptide is tRNA (guanine-N(7)-)-methyltransferase (Vibrio cholerae serotype O1 (strain ATCC 39315 / El Tor Inaba N16961)).